A 596-amino-acid polypeptide reads, in one-letter code: Cytochrome P450 monooxygenase FUM15 (596 aa).

Residues D476–E512 are disordered. A compositionally biased stretch (basic and acidic residues) spans G484–S503. Residue C536 participates in heme binding.

The protein belongs to the cytochrome P450 family. Heme is required as a cofactor.

Its subcellular location is the endoplasmic reticulum. Its pathway is secondary metabolite biosynthesis. Functionally, cytochrome P450 monooxygenase; part of the gene cluster that mediates the biosynthesis of fumonisins B1 (FB1), B2 (FB2), B3 (FB3), and B4 (FB4), which are carcinogenic mycotoxins. Within the pathway, FUM15 may be responsible for the hydroxylations at positions C-14 and/or C-15. Also plays a role in self-protection from FB1 toxicity, probably through derivatization of FB1, and may contribute to ceramide biosynthesis. The biosynthesis starts with the FUM1-catalyzed carbon chain assembly from one molecule of acetyl-CoA, eight molecules of malonyl-CoA, and two molecules of methionine (in S-adenosyl form). The C18 polyketide chain is released from the enzyme by a nucleophilic attack of a carbanion, which is derived from R-carbon of alanine by decarboxylation, on the carbonyl carbon of polyketide acyl chain. This step is catalyzed by the pyridoxal 5'-phosphate-dependent aminoacyl transferase FUM8. The resultant 3-keto intermediate is then stereospecifically reduced to a 3-hydroxyl product by reductase FUM13. Subsequent oxidations at C-10 by the cytochrome P450 monooxygenase FUM2, C-14 and C-15 by FUM6, FUM12 or FUM15, tricarballylic esterification of the hydroxyl groups on C-14 and C-15 by acyltransferase FUM14, and C-5 hydroxylation by 2-keto-glutarate-dependent dioxygenase FUM3 furnish the biosynthesis of fumonisins. The tricarballylic moieties are most likely derived from the citric acid cycle, and their addition to the carbon backbone may involve FUM7, FUM10, FUM11 and FUM14. The protein is Cytochrome P450 monooxygenase FUM15 of Gibberella moniliformis (strain M3125 / FGSC 7600) (Maize ear and stalk rot fungus).